Consider the following 100-residue polypeptide: MAKISLIQREFKRQRLVLKYEKKRTFLKREIQRTPFLKQKLQFHRILQQLPRNSASVRLHNRCLVTGRSRGYYRDFGLSRHVLREMAHQGFLPGVIKSSW.

The protein belongs to the universal ribosomal protein uS14 family. In terms of assembly, part of the 30S ribosomal subunit.

The protein resides in the plastid. Its subcellular location is the chloroplast. Functionally, binds 16S rRNA, required for the assembly of 30S particles. The protein is Small ribosomal subunit protein uS14c of Oedogonium cardiacum (Filamentous green alga).